Reading from the N-terminus, the 141-residue chain is NADH-quinone oxidoreductase subunit A (141 aa).

Helical transmembrane passes span 24–44 (LLALALYVALACIIVVSLLLA), 77–97 (VPFYLTAIFFVVFDVEVAFIA), and 106–126 (LGWAGLAQIAFFIITLLVALI).

This sequence belongs to the complex I subunit 3 family. As to quaternary structure, NDH-1 is composed of 14 different subunits. Subunits NuoA, H, J, K, L, M, N constitute the membrane sector of the complex.

It localises to the cell inner membrane. The enzyme catalyses a quinone + NADH + 5 H(+)(in) = a quinol + NAD(+) + 4 H(+)(out). Its function is as follows. NDH-1 shuttles electrons from NADH, via FMN and iron-sulfur (Fe-S) centers, to quinones in the respiratory chain. The immediate electron acceptor for the enzyme in this species is believed to be ubiquinone. Couples the redox reaction to proton translocation (for every two electrons transferred, four hydrogen ions are translocated across the cytoplasmic membrane), and thus conserves the redox energy in a proton gradient. This Syntrophotalea carbinolica (strain DSM 2380 / NBRC 103641 / GraBd1) (Pelobacter carbinolicus) protein is NADH-quinone oxidoreductase subunit A.